The sequence spans 404 residues: Glucose-1-phosphate adenylyltransferase (404 aa).

Alpha-D-glucose 1-phosphate-binding positions include Tyr-99, Gly-164, 179–180 (EK), and Ser-197.

The protein belongs to the bacterial/plant glucose-1-phosphate adenylyltransferase family. Homotetramer.

The catalysed reaction is alpha-D-glucose 1-phosphate + ATP + H(+) = ADP-alpha-D-glucose + diphosphate. It functions in the pathway glycan biosynthesis; glycogen biosynthesis. In terms of biological role, involved in the biosynthesis of ADP-glucose, a building block required for the elongation reactions to produce glycogen. Catalyzes the reaction between ATP and alpha-D-glucose 1-phosphate (G1P) to produce pyrophosphate and ADP-Glc. This is Glucose-1-phosphate adenylyltransferase from Rhodococcus jostii (strain RHA1).